Here is a 553-residue protein sequence, read N- to C-terminus: Cytokine-like nuclear factor N-PAC (553 aa).

Positions 8 to 66 constitute a PWWP domain; the sequence is LGDLVWGKLGRYPPWPGKIVNPPKDLKKPRGKKCFFVKFFGTEDHAWIKVEQLKPYHAH. Basic and acidic residues-rich tracts occupy residues 92 to 145 and 162 to 182; these read RAKG…EGKK and RAQE…KDLT. Residues 92–188 are disordered; the sequence is RAKGKDQTSS…KDLTIPESST (97 aa). Residue Ser-130 is modified to Phosphoserine. Lys-135 is covalently cross-linked (Glycyl lysine isopeptide (Lys-Gly) (interchain with G-Cter in SUMO2)). A Phosphoserine modification is found at Ser-167. The segment at residues 168–180 is a DNA-binding region (a.T hook); that stretch reads PRKRGRPPKDEKD. Glycyl lysine isopeptide (Lys-Gly) (interchain with G-Cter in SUMO2) cross-links involve residues Lys-176, Lys-179, Lys-201, and Lys-211. The interval 214-217 is interaction with histone H3; sequence DPHF. Residues 216 to 225 are interaction with KDM1B; the sequence is HFHHFLLSQT. Residues Lys-227, Lys-237, Lys-240, and Lys-269 each participate in a glycyl lysine isopeptide (Lys-Gly) (interchain with G-Cter in SUMO2) cross-link. The interval 261–553 is dehydrogenase domain; that stretch reads GSITPTDKKI…MSAVYRAYIH (293 aa). NAD(+) is bound at residue 271-285; it reads GFLGLGLMGSGIVSN. Lys-302 participates in a covalent cross-link: Glycyl lysine isopeptide (Lys-Gly) (interchain with G-Cter in SUMO2). NAD(+) is bound by residues Thr-362 and Lys-505. Ser-540 is modified (phosphoserine).

The protein belongs to the HIBADH-related family. NP60 subfamily. As to quaternary structure, homotetramere. Interacts with MAPK14. Interacts with KDM1B at nucleosomes; this interaction stimulates H3K4me1 and H3K4me2 demethylation. Binds to mononucleosomes. Interacts with GATA4; the interaction is required for a synergistic activation of GATA4 target genes transcription.

Its subcellular location is the nucleus. It is found in the chromosome. Functionally, cytokine-like nuclear factor with chromatin gene reader activity involved in chromatin modification and regulation of gene expression. Acts as a nucleosome-destabilizing factor that is recruited to genes during transcriptional activation. Recognizes and binds histone H3 without a preference for specific epigenetic markers and also binds DNA. Interacts with KDM1B and promotes its histone demethylase activity by facilitating the capture of H3 tails, they form a multifunctional enzyme complex that modifies transcribed chromatin and facilitates Pol II transcription through nucleosomes. Stimulates the acetylation of 'Lys-56' of nucleosomal histone H3 (H3K56ac) by EP300. With GATA4, co-binds a defined set of heart development genes and coregulates their expression during cardiomyocyte differentiation. Regulates p38 MAP kinase activity by mediating stress activation of MAPK14/p38alpha and specifically regulating MAPK14 signaling. Indirectly promotes phosphorylation of MAPK14 and activation of ATF2. The phosphorylation of MAPK14 requires upstream activity of MAP2K4 and MAP2K6. This is Cytokine-like nuclear factor N-PAC (GLYR1) from Pongo abelii (Sumatran orangutan).